The chain runs to 708 residues: MAAAGPSTRASSAAAAAALSRRGRRGRCDETAAAKTGAPGPASGPSLLVLSPPLLQPPLPPRPEESGCAGCLEPPGEAAALPCGHSLCRGCAQRAADAAGPGCPRCRARGPGWARRRARDDGQADSEVLGECARRSQPERCRPRRDGGAAAAGPRPEQEPRAAPAEPDFIFRAPIKLSKPGELREEYESLRKLREEKLQEEKPSEDQIHKLLPEDTETGKRKMDEQKKRDEPLVLKTNLERCPARLSDSENEEPSRGQMTQTHRSAFVSKNNSYSLAFLAGKLNSKVERSQSCSDTAQERAKSRVRAVPGNKAKVTTMTPASNPIIGVLLSTQNNRCVSAPDLTIEKRLPFSSLSSLASLHKPERSVSPESNDSISEELNHFKPIVCSPCTPPKRLPDGRVLSPLIIKSTPRNLNRSLQKQTSYEASPRILKKWEQIFQERQIKKTLSKATLTSLAPEMGEELLGSEGIHSSKEKPLVAVNTRLSGGQVLSEYTGPTSADLDHFPSVSQTKAEQDSDNKSSTEIPLETCCSSELKGGGSGTSLEREQFEGLGSTPDAKLDKTCISRAMKITTVNSVLPQNSVLGGVLKTKQQLKTLNHFDLTNGVLVESLSEEPLPSLRRGRKRHCKTKHLEQNGSLKKLRQTSGEVGLAPTDPVLREMEQKLQQEEEDRQLALQLQRMFDNERRTVSRRKGSVDQYLLRSSNMAGAK.

Composition is skewed to low complexity over residues 1–20 (MAAA…AALS) and 33–53 (AAKT…LSPP). 3 disordered regions span residues 1 to 71 (MAAA…CAGC), 96 to 169 (ADAA…EPDF), and 195 to 262 (EEKL…MTQT). The residue at position 12 (serine 12) is a Phosphoserine. The segment at 68–107 (CAGCLEPPGEAAALPCGHSLCRGCAQRAADAAGPGCPRCR) adopts an RING-type zinc-finger fold. Over residues 132-147 (CARRSQPERCRPRRDG) the composition is skewed to basic and acidic residues. Low complexity predominate over residues 148 to 167 (GAAAAGPRPEQEPRAAPAEP). The span at 195–243 (EEKLQEEKPSEDQIHKLLPEDTETGKRKMDEQKKRDEPLVLKTNLERCP) shows a compositional bias: basic and acidic residues. The UMI motif signature appears at 205-213 (EDQIHKLLP). Phosphoserine occurs at positions 247 and 249. Residue lysine 286 forms a Glycyl lysine isopeptide (Lys-Gly) (interchain with G-Cter in SUMO2) linkage. At serine 339 the chain carries Phosphoserine. Lysine 362 participates in a covalent cross-link: Glycyl lysine isopeptide (Lys-Gly) (interchain with G-Cter in SUMO2). Phosphoserine occurs at positions 368, 403, and 409. Residue threonine 410 is modified to Phosphothreonine. The residue at position 485 (serine 485) is a Phosphoserine. A disordered region spans residues 491–555 (SEYTGPTSAD…EQFEGLGSTP (65 aa)). Residue lysine 511 forms a Glycyl lysine isopeptide (Lys-Gly) (interchain with G-Cter in SUMO2) linkage. Threonine 554 carries the post-translational modification Phosphothreonine. Serine 644 is modified (phosphoserine). Residues 665–682 (QEEEDRQLALQLQRMFDN) carry the MIU motif motif. Positions 689–701 (RRKGSVDQYLLRS) match the LR motif motif. Phosphoserine is present on serine 693.

Belongs to the RNF169 family. Interacts with DYRK1B. In terms of processing, phosphorylated by DYRK1A; phosphorylation increases RNF169 ability to block accumulation of TP53BP1 at the DSB sites.

Its subcellular location is the chromosome. It is found in the nucleus. It localises to the nucleoplasm. The catalysed reaction is S-ubiquitinyl-[E2 ubiquitin-conjugating enzyme]-L-cysteine + [acceptor protein]-L-lysine = [E2 ubiquitin-conjugating enzyme]-L-cysteine + N(6)-ubiquitinyl-[acceptor protein]-L-lysine.. The protein operates within protein modification; protein ubiquitination. Functionally, probable E3 ubiquitin-protein ligase that acts as a regulator of double-strand breaks (DSBs) repair following DNA damage. Functions in a non-canonical fashion to harness RNF168-mediated protein recruitment to DSB-containing chromatin, thereby contributing to regulation of DSB repair pathway utilization. Once recruited to DSB repair sites by recognizing and binding ubiquitin catalyzed by RNF168, competes with TP53BP1 and BRCA1 for association with RNF168-modified chromatin, thereby favouring homologous recombination repair (HRR) and single-strand annealing (SSA) instead of non-homologous end joining (NHEJ) mediated by TP53BP1. E3 ubiquitin-protein ligase activity is not required for regulation of DSBs repair. The polypeptide is E3 ubiquitin-protein ligase RNF169 (RNF169) (Homo sapiens (Human)).